A 1369-amino-acid chain; its full sequence is Rho guanine nucleotide exchange factor 10 (1369 aa).

Residues 1 to 106 (MRPPGFLSRA…ETTPVAEPTK (106 aa)) form a disordered region. A compositionally biased stretch (acidic residues) spans 46–64 (NNEEEEGEQFDFDSGDEIP). The segment covering 83–100 (EAPAPTGGEDGAGAETTP) has biased composition (low complexity). Ser180 bears the Phosphoserine mark. Residues 184 to 254 (EAETPEVTED…ENSDSEPDEM (71 aa)) form a disordered region. Polar residues predominate over residues 196–209 (PNSLSSEEPPTSED). A coiled-coil region spans residues 304–355 (KKQLSHDLTRLKEHYEKKMRDLMASTVGVVEIQQLRQKHELKMQKLVKAAKD). Ser379 bears the Phosphoserine mark. Residues 421-608 (VRRYILGSVV…ETLAEKLNER (188 aa)) enclose the DH domain. Disordered regions lie at residues 1226–1260 (KDKSRDSLAPGPEPQDEDQKDALPSGGAGSSLSQG) and 1277–1297 (QKSDLSSSSGSLSLSHGSSSL). The span at 1279–1296 (SDLSSSSGSLSLSHGSSS) shows a compositional bias: low complexity. Ser1287 is subject to Phosphoserine. Gln1338 is modified (N5-methylglutamine).

Post-translationally, methylated at Gln-1338 by N6AMT1.

In terms of biological role, may play a role in developmental myelination of peripheral nerves. The polypeptide is Rho guanine nucleotide exchange factor 10 (ARHGEF10) (Homo sapiens (Human)).